The following is a 1487-amino-acid chain: MASQRSDFAPDLYDFIESNDFGEDPLIRAASAAEEGFTQPAAPDLLYGSQNMFGVDDAPLSTPVVVIPPPSPAPEPRGGKAKRSPSAAGSGGPPTPAAAAQPASPAPSPAPGLAAMLKMVHSSVAPGNGRRATGSSSPGGGDAADPVALDSDTETCPGSPQPEFPSSASPGGGSPAPRVRSISISSSSSSSSSMDEDDQADGAGASSSSSSSSDDSDSDEGGEEETPRPRHSQNAAKTPSAAGSPGPSSGGDRPAAGAATPKSCRSGAASPGAPAPAPASAPAPSRPGGGLLPPGARILEYLEGVREANLAKTLERPEPPAGMASPPGRSPHRLPKDQRPKSALAGASKRKRANPRPRPQTQTQAPAEEAPQTAVWDLLDMNSSQATGAAAAAASAPAAASCAPGVYQREPLLTPSGDPWPGSDPPPMGRVRYGGTGDSRDGLWDDPEIVLAASRYAEAQAPVPVFVPEMGDSTKQYNALVRMVFESREAMSWLQNSKLSGQDQNLAQFCQKFIHAPRGHGSFITGSVANPLPHIGDAMAAGNALWALPHAAASVAMSRRYDRTQKSFILQSLRRAYADMAYPRDEAGRPDSLAAVAGCPAQAAAAAASQQQPEAPAPSVRVREAYTRVCAALGPRRKAAAAAAAPGTRAPRPSAFRLRELGDACVLACQAVFEALLRLRGGASAVPGLDPSEIPSPACPPEALCSNPAGLETAALSLYELRDLVERARLLGDSDPTHRLGSDELRLAVRAVLVVARTVAPLVRYNAEGARARASAWTVTQAVFSIPSLVGGMLGEAVSLLAPPTRSQQPSSSSPGGEPFSGSAAAEGSLQTLPPLWPTVPGKQSATVPSSHSQSPQHSQSGGGAGATTATCCRATQTNARSRGQQHQPQKARSPQAAASPAHLSQEAMPGSSSDDRAIHGRPRGKSGKRRSEPLEPAAQAGASASFSSSARGYDPSGPVDSPPAPKRRVATPGHQAPRALGPMPAEGPDRRGGFRRVPRGDCHTPRPSDAACAAYCPPELVAELIDNQLFPEAWRPALTFDPQALATIAARCSGPPARDGARLGELAASGPLRRRAAWMHQIPDPEDVKVVVLYSPLQDEDLLGGLPASRPGGSRREPLWSDLKGGLSALLAALGNRILTKRSHAWAGNWTGAPDVSALNAQGVLLLSTGDLAFTGCVEYLCLRLGSARRKLLVLDAVSTEDWPQDGPAISQYHIYMRAALTPRVACAVRWPGERHLSRAVLTSSTLFGPGLFARAEAAFARLYPDSAPLRLCRSSNVAYTVDTRAGERTRVPLAPREYRQRVLPDYDGCKDMRAQAEGLGFHDPDFEEGAAQSHRAANRWGLGAWLRPVYLACGRRGAGAVEPSELLIPELLSEFCRVALLEPDAEAEPLVLPITEAPRRRAPRVDWEPGFGSRSTSVLHMGATELCLPEPDDELEIDGAGDVELVVEHPGPSPGVAQALRRAPIKIEVVSDDEDGGDWCNPYLS.

Disordered regions lie at residues Ala41 to Gly295, Leu310 to Pro371, Arg409 to Gly442, and Pro803 to Arg1007. The segment covering Val66 to Glu75 has biased composition (pro residues). Composition is skewed to low complexity over residues Pro165–Ser193 and Asp201–Ser213. Acidic residues predominate over residues Asp214–Glu224. Residues Ala235 to Gly272 show a composition bias toward low complexity. The span at Ala273–Ser285 shows a compositional bias: pro residues. Low complexity-rich tracts occupy residues Ser807–Ser829, Pro849–Gln860, and Ala867–Gln877. The segment covering Thr878–Arg893 has biased composition (polar residues). Residues His920–Lys929 show a composition bias toward basic residues. Over residues Ala938–Ala951 the composition is skewed to low complexity. Over residues Gly988 to Arg1007 the composition is skewed to basic and acidic residues.

This sequence belongs to the herpesviridae ICP4 family. In terms of processing, a long stretch of serine residues may be a major site of phosphorylation.

The protein resides in the host nucleus. Functionally, this IE protein is a multifunctional protein capable of migrating to the nucleus, binding to DNA, trans-activating other viral genes, and autoregulating its own synthesis. The protein is Major viral transcription factor (IE) of Equine herpesvirus 1 (strain Kentucky A) (EHV-1).